The following is a 1425-amino-acid chain: Nephrocystin-4 (1425 aa).

A Phosphoserine modification is found at Ser-145. Positions 448–554 are disordered; it reads FSLSSDGPTE…VSHLEADLSQ (107 aa). 2 stretches are compositionally biased toward low complexity: residues 473–484 and 507–530; these read PASPSGTPAPAA and SPLS…SQSP. The interval 822 to 1425 is sufficient for basal bodies localization; that stretch reads LTLANVGHAC…ETFCVKVLYQ (604 aa).

Belongs to the NPHP4 family. Interacts with NPHP1 and RPGRIP1L/NPHP8; NPHP1, NPHP4 and RPGRIP1L are proposed to form a functional NPHP1-4-8 module localized to cell-cell contacts and the ciliary transition zone; NPHP4 mediates the interaction between NPHP1 and RPGRIP1L. Interacts with IQCB1/NPHP5; the interaction likely requires additional interactors. Interacts with RPGRIP1, CEP164, JADE1, PALS1, INADL, PARD6A, INVS, DVL2. Interacts with INTU; INTU mediates the interaction between NPHP4 and DAAM1. Interacts with JADE1. Interacts with SPATA7. Expressed in the retina (at protein level).

The protein localises to the cytoplasm. It localises to the cytoskeleton. Its subcellular location is the cilium basal body. It is found in the microtubule organizing center. The protein resides in the centrosome. The protein localises to the cell junction. It localises to the tight junction. Its function is as follows. Involved in the organization of apical junctions; the function is proposed to implicate a NPHP1-4-8 module. Does not seem to be strictly required for ciliogenesis. Required for building functional cilia. Involved in the organization of the subapical actin network in multiciliated epithelial cells. Seems to recruit INT to basal bodies of motile cilia which subsequently interacts with actin-modifying proteins such as DAAM1. In cooperation with INVS may down-regulate the canonical Wnt pathway and promote the Wnt-PCP pathway by regulating expression and subcellular location of disheveled proteins. Stabilizes protein levels of JADE1 and promotes its translocation to the nucleus leading to cooperative inhibition of canonical Wnt signaling. Acts as negative regulator of the hippo pathway by association with LATS1 and modifying LATS1-dependent phosphorylation and localization of WWTR1/TAZ. The sequence is that of Nephrocystin-4 (Nphp4) from Mus musculus (Mouse).